The following is a 643-amino-acid chain: Cell pattern formation-associated protein asm-1 (643 aa).

Positions 1-37 (MNPNTPADVYYGQMSQGSSMPVTTVPSHSHYASQQPP) are disordered. Residues 13-33 (QMSQGSSMPVTTVPSHSHYAS) show a composition bias toward polar residues. The 107-residue stretch at 116-222 (RVTATLWEDE…HNIGALLYHP (107 aa)) folds into the HTH APSES-type domain. The segment at residues 150–171 (GTKLLNVAGMTRGRRDGILKSE) is a DNA-binding region (H-T-H motif). The segment at 229–627 (SQVMAAAEQR…GSLPSPTYTA (399 aa)) is disordered. Over residues 306-335 (DGYQWSQQSMSGTQGNSSLSLDTSLGSNAR) the composition is skewed to polar residues. The segment covering 336 to 349 (SMPSTPATTPPGST) has biased composition (low complexity). Residues 350 to 367 (IQSMQNYPPVSQSYESSR) are compositionally biased toward polar residues. Residues 368 to 391 (QMYQGQSAQQAQYQSQQHYSSQPQ) show a composition bias toward low complexity. Polar residues-rich tracts occupy residues 471–481 (GSYNYNTQAVN), 529–551 (QPSS…TQGN), and 563–577 (SLPN…VMNG). Residues 583–612 (KRGRDDDDDGGRPTTSAPNLGPGMDMKRRK) form a nuclear localization domain region.

Belongs to the EFG1/PHD1/stuA family.

The protein resides in the nucleus. Its function is as follows. Transcription factor that regulates asexual reproduction. Binds the StuA-response elements (StRE) with the consensus sequence 5'-(A/T)CGCG(T/A)N(A/C)-3' at the promoters of target genes. Required for rapid conidial germination, normal vegetative morphology, and protoperithecium formation. The protein is Cell pattern formation-associated protein asm-1 of Neurospora crassa (strain ATCC 24698 / 74-OR23-1A / CBS 708.71 / DSM 1257 / FGSC 987).